A 377-amino-acid chain; its full sequence is Nitric oxide reductase FlRd-NAD(+) reductase (377 aa).

This sequence belongs to the FAD-dependent oxidoreductase family. It depends on FAD as a cofactor.

It is found in the cytoplasm. It catalyses the reaction 2 reduced [nitric oxide reductase rubredoxin domain] + NAD(+) + H(+) = 2 oxidized [nitric oxide reductase rubredoxin domain] + NADH. Its pathway is nitrogen metabolism; nitric oxide reduction. Its function is as follows. One of at least two accessory proteins for anaerobic nitric oxide (NO) reductase. Reduces the rubredoxin moiety of NO reductase. The chain is Nitric oxide reductase FlRd-NAD(+) reductase from Escherichia coli O139:H28 (strain E24377A / ETEC).